The following is a 159-amino-acid chain: SsrA-binding protein (159 aa).

The protein belongs to the SmpB family.

The protein localises to the cytoplasm. Required for rescue of stalled ribosomes mediated by trans-translation. Binds to transfer-messenger RNA (tmRNA), required for stable association of tmRNA with ribosomes. tmRNA and SmpB together mimic tRNA shape, replacing the anticodon stem-loop with SmpB. tmRNA is encoded by the ssrA gene; the 2 termini fold to resemble tRNA(Ala) and it encodes a 'tag peptide', a short internal open reading frame. During trans-translation Ala-aminoacylated tmRNA acts like a tRNA, entering the A-site of stalled ribosomes, displacing the stalled mRNA. The ribosome then switches to translate the ORF on the tmRNA; the nascent peptide is terminated with the 'tag peptide' encoded by the tmRNA and targeted for degradation. The ribosome is freed to recommence translation, which seems to be the essential function of trans-translation. In Acidiphilium cryptum (strain JF-5), this protein is SsrA-binding protein.